The sequence spans 141 residues: 16 kDa protein (141 aa).

Residues 95–116 (ESSSATRKKSHNSKNSKKKFKE) form a disordered region. The span at 100–113 (TRKKSHNSKNSKKK) shows a compositional bias: basic residues.

This Tobacco rattle virus (strain PSG) protein is 16 kDa protein.